The following is a 509-amino-acid chain: Dihydrolipoyl dehydrogenase, mitochondrial (509 aa).

The N-terminal 35 residues, 1–35, are a transit peptide targeting the mitochondrion; the sequence is MQSWSRVYCSLAKRGHFNRISHGLQGLSAVPLRTY. N6-acetyllysine; alternate is present on Lys-66. Lys-66 is subject to N6-succinyllysine; alternate. Residues 71–80 and Lys-89 contribute to the FAD site; that span reads EKNETLGGTC. A disulfide bridge connects residues Cys-80 and Cys-85. N6-acetyllysine; alternate occurs at positions 104, 122, 132, and 143. Lys-104, Lys-122, Lys-132, and Lys-143 each carry N6-succinyllysine; alternate. Gly-154 contributes to the FAD binding site. Lys-159 and Lys-166 each carry N6-succinyllysine. 183–185 serves as a coordination point for FAD; it reads TGS. NAD(+)-binding positions include 220 to 227 and Glu-243; that span reads GAGVIGVE. An N6-succinyllysine mark is found at Lys-273 and Lys-277. Val-278 contributes to the NAD(+) binding site. Residues Ser-285 and Ser-297 each carry the phosphoserine modification. Gly-314 serves as a coordination point for NAD(+). At Lys-346 the chain carries N6-acetyllysine. Residues Asp-355 and 361–364 each bind FAD; that span reads MLAH. Lys-410 carries the post-translational modification N6-acetyllysine; alternate. Position 410 is an N6-succinyllysine; alternate (Lys-410). Lys-417 and Lys-420 each carry N6-acetyllysine. An N6-succinyllysine modification is found at Lys-430. The active-site Proton acceptor is the His-487. Ser-502 is modified (phosphoserine). At Lys-505 the chain carries N6-acetyllysine; alternate. Lys-505 is modified (N6-succinyllysine; alternate).

This sequence belongs to the class-I pyridine nucleotide-disulfide oxidoreductase family. Homodimer. Part of the multimeric pyruvate dehydrogenase complex that contains multiple copies of pyruvate dehydrogenase (subunits PDHA (PDHA1 or PDHA2) and PDHB, E1), dihydrolipoamide acetyltransferase (DLAT, E2) and lipoamide dehydrogenase (DLD, E3). These subunits are bound to an inner core composed of about 48 DLAT and 12 PDHX molecules (by non covalent bonds). The 2-oxoglutarate dehydrogenase complex is composed of OGDH (2-oxoglutarate dehydrogenase; E1), DLST (dihydrolipoamide succinyltransferase; E2), DLD (dihydrolipoamide dehydrogenase; E3) and the assembly factor KGD4. It contains multiple copies of the three enzymatic components (E1, E2 and E3). In the nucleus, the 2-oxoglutarate dehydrogenase complex associates with KAT2A. Interacts with PDHX. Requires FAD as cofactor. In terms of processing, tyrosine phosphorylated.

Its subcellular location is the mitochondrion matrix. It localises to the nucleus. It is found in the cell projection. The protein resides in the cilium. The protein localises to the flagellum. Its subcellular location is the cytoplasmic vesicle. It localises to the secretory vesicle. It is found in the acrosome. The enzyme catalyses N(6)-[(R)-dihydrolipoyl]-L-lysyl-[protein] + NAD(+) = N(6)-[(R)-lipoyl]-L-lysyl-[protein] + NADH + H(+). Disruption of native heterodimer state inhibits primary dihydrolipoamide dehydrogenase activity and induces serine protease activity. Its function is as follows. Lipoamide dehydrogenase is a component of the glycine cleavage system as well as an E3 component of three alpha-ketoacid dehydrogenase complexes (pyruvate-, alpha-ketoglutarate-, and branched-chain amino acid-dehydrogenase complex). The 2-oxoglutarate dehydrogenase complex is mainly active in the mitochondrion. A fraction of the 2-oxoglutarate dehydrogenase complex also localizes in the nucleus and is required for lysine succinylation of histones: associates with KAT2A on chromatin and provides succinyl-CoA to histone succinyltransferase KAT2A. In monomeric form may have additional moonlighting function as serine protease. Involved in the hyperactivation of spermatazoa during capacitation and in the spermatazoal acrosome reaction. The chain is Dihydrolipoyl dehydrogenase, mitochondrial (DLD) from Homo sapiens (Human).